A 193-amino-acid polypeptide reads, in one-letter code: Fe/S biogenesis protein NfuA (193 aa).

Residues Cys149 and Cys152 each contribute to the [4Fe-4S] cluster site.

The protein belongs to the NfuA family. As to quaternary structure, homodimer. Requires [4Fe-4S] cluster as cofactor.

Involved in iron-sulfur cluster biogenesis. Binds a 4Fe-4S cluster, can transfer this cluster to apoproteins, and thereby intervenes in the maturation of Fe/S proteins. Could also act as a scaffold/chaperone for damaged Fe/S proteins. This Psychromonas ingrahamii (strain DSM 17664 / CCUG 51855 / 37) protein is Fe/S biogenesis protein NfuA.